A 528-amino-acid chain; its full sequence is Phosphoenolpyruvate carboxykinase (ATP) (528 aa).

Residues arginine 56, tyrosine 192, and lysine 198 each contribute to the substrate site. Residues lysine 198, histidine 217, and 233-241 contribute to the ATP site; that span reads GLSGTGKTT. Mn(2+) contacts are provided by lysine 198 and histidine 217. Aspartate 254 contributes to the Mn(2+) binding site. 3 residues coordinate ATP: glutamate 282, arginine 319, and threonine 444. Substrate is bound at residue arginine 319.

This sequence belongs to the phosphoenolpyruvate carboxykinase (ATP) family. It depends on Mn(2+) as a cofactor.

It is found in the cytoplasm. The enzyme catalyses oxaloacetate + ATP = phosphoenolpyruvate + ADP + CO2. It functions in the pathway carbohydrate biosynthesis; gluconeogenesis. In terms of biological role, involved in the gluconeogenesis. Catalyzes the conversion of oxaloacetate (OAA) to phosphoenolpyruvate (PEP) through direct phosphoryl transfer between the nucleoside triphosphate and OAA. This Bacillus cereus (strain 03BB102) protein is Phosphoenolpyruvate carboxykinase (ATP).